The sequence spans 200 residues: 3-isopropylmalate dehydratase small subunit (200 aa).

The protein belongs to the LeuD family. LeuD type 1 subfamily. Heterodimer of LeuC and LeuD.

The enzyme catalyses (2R,3S)-3-isopropylmalate = (2S)-2-isopropylmalate. It functions in the pathway amino-acid biosynthesis; L-leucine biosynthesis; L-leucine from 3-methyl-2-oxobutanoate: step 2/4. In terms of biological role, catalyzes the isomerization between 2-isopropylmalate and 3-isopropylmalate, via the formation of 2-isopropylmaleate. In Histophilus somni (strain 129Pt) (Haemophilus somnus), this protein is 3-isopropylmalate dehydratase small subunit.